Here is a 339-residue protein sequence, read N- to C-terminus: Ribosomal RNA small subunit methyltransferase H (339 aa).

S-adenosyl-L-methionine contacts are provided by residues Gly-52–His-54, Asp-71, Phe-98, Asp-130, and Gln-137.

The protein belongs to the methyltransferase superfamily. RsmH family.

It is found in the cytoplasm. The enzyme catalyses cytidine(1402) in 16S rRNA + S-adenosyl-L-methionine = N(4)-methylcytidine(1402) in 16S rRNA + S-adenosyl-L-homocysteine + H(+). In terms of biological role, specifically methylates the N4 position of cytidine in position 1402 (C1402) of 16S rRNA. This is Ribosomal RNA small subunit methyltransferase H from Corynebacterium diphtheriae (strain ATCC 700971 / NCTC 13129 / Biotype gravis).